A 141-amino-acid chain; its full sequence is Hemoglobin subunit alpha-2 (141 aa).

The 141-residue stretch at 1 to 141 (VLTEDDKNHV…VCKDLVSKYR (141 aa)) folds into the Globin domain. H58 is a binding site for O2. Heme b is bound at residue H87.

The protein belongs to the globin family. In terms of assembly, the major hemoglobin component (HbIII) is a heterotetramer of two alpha-2 chains and two beta-1 chains. As to expression, red blood cells.

Functionally, involved in oxygen transport from the lung to the various peripheral tissues. The protein is Hemoglobin subunit alpha-2 of Varanus albigularis (White-throated monitor).